Consider the following 253-residue polypeptide: Imidazole glycerol phosphate synthase subunit HisF (253 aa).

Catalysis depends on residues D11 and D130.

This sequence belongs to the HisA/HisF family. As to quaternary structure, heterodimer of HisH and HisF.

Its subcellular location is the cytoplasm. It carries out the reaction 5-[(5-phospho-1-deoxy-D-ribulos-1-ylimino)methylamino]-1-(5-phospho-beta-D-ribosyl)imidazole-4-carboxamide + L-glutamine = D-erythro-1-(imidazol-4-yl)glycerol 3-phosphate + 5-amino-1-(5-phospho-beta-D-ribosyl)imidazole-4-carboxamide + L-glutamate + H(+). Its pathway is amino-acid biosynthesis; L-histidine biosynthesis; L-histidine from 5-phospho-alpha-D-ribose 1-diphosphate: step 5/9. In terms of biological role, IGPS catalyzes the conversion of PRFAR and glutamine to IGP, AICAR and glutamate. The HisF subunit catalyzes the cyclization activity that produces IGP and AICAR from PRFAR using the ammonia provided by the HisH subunit. This chain is Imidazole glycerol phosphate synthase subunit HisF, found in Dehalococcoides mccartyi (strain ATCC BAA-2266 / KCTC 15142 / 195) (Dehalococcoides ethenogenes (strain 195)).